Consider the following 286-residue polypeptide: Protein WVD2-like 1 (286 aa).

A disordered region spans residues 31–101; sequence ETDEEFEVKE…ENKKHIDDED (71 aa). Threonine 32 carries the post-translational modification Phosphothreonine. The segment covering 38–47 has biased composition (basic and acidic residues); that stretch reads VKECTEEKSL. The stretch at 131–182 forms a coiled coil; that stretch reads AQRAEKRKEYYQKLEEKNQALEAERNELEQRQKDEQEAALKQLRKNLKFKAK. Residues 186-286 are disordered; the sequence is NFYYEAPPAK…KPVNESSEEA (101 aa). Polar residues predominate over residues 234–247; sequence TVSNRNRHSTGTVQ.

This sequence belongs to the TPX2 family.

The protein localises to the cytoplasm. Its subcellular location is the cytoskeleton. Microtubule-associated protein (MAP) that regulates the orientation of interphase cortical microtubules. Modulates both rotational polarity and anisotropic cell expansion during organ growth. Promotes clockwise root and etiolated hypocotyls coiling, clockwise leaf curling, but left-handed petiole twisting. The chain is Protein WVD2-like 1 (WDL1) from Arabidopsis thaliana (Mouse-ear cress).